The chain runs to 390 residues: Protein AC109 (390 aa).

The protein resides in the host cytoplasm. It localises to the host nucleus. Functionally, plays a role in the transport of the budded virion (BV) to the host nucleus and for occlusion of viral progeny. The protein is Protein AC109 (ORF109) of Lepidoptera (butterflies and moths).